A 159-amino-acid chain; its full sequence is Cytochrome c-type biogenesis protein CcmE (159 aa).

Topologically, residues 1 to 7 are cytoplasmic; that stretch reads MTRKGRR. Residues 8 to 28 form a helical; Signal-anchor for type II membrane protein membrane-spanning segment; the sequence is LVLIGAGLGVLALAAGLILSA. At 29 to 159 the chain is on the periplasmic side; sequence LNDTIVFFRS…AAPVQRAPGS (131 aa). His-121 and Tyr-125 together coordinate heme. The interval 134 to 159 is disordered; it reads LKKQGRWQEGGPAPGTAAPVQRAPGS.

The protein belongs to the CcmE/CycJ family.

It localises to the cell inner membrane. In terms of biological role, heme chaperone required for the biogenesis of c-type cytochromes. Transiently binds heme delivered by CcmC and transfers the heme to apo-cytochromes in a process facilitated by CcmF and CcmH. The polypeptide is Cytochrome c-type biogenesis protein CcmE (Xanthobacter autotrophicus (strain ATCC BAA-1158 / Py2)).